The primary structure comprises 537 residues: Tyrosine-protein phosphatase CDC14 homolog (537 aa).

Residues 182 to 345 form the Tyrosine-protein phosphatase domain; it reads DFNWISPKFI…QVHFRAYFYE (164 aa). Cys-286 acts as the Phosphocysteine intermediate in catalysis. Residues 359–537 form a disordered region; sequence EPLATPPRHP…PKPSKSRLIS (179 aa). The segment covering 370 to 382 has biased composition (polar residues); the sequence is NATNGTSQSNIST. The segment covering 400–411 has biased composition (low complexity); that stretch reads PPSARRLPSASS. Positions 421–437 are enriched in polar residues; sequence ASKQSIQNENKASYSSY. At Thr-453 the chain carries Phosphothreonine. A phosphoserine mark is found at Ser-468 and Ser-470. Residues 490–502 show a composition bias toward low complexity; that stretch reads RRTSGNRWSSGSS. Ser-513 carries the phosphoserine modification. The segment covering 514–523 has biased composition (polar residues); sequence MSSLNNTSNG. Over residues 526 to 537 the composition is skewed to basic residues; it reads AKPKPSKSRLIS.

The protein belongs to the protein-tyrosine phosphatase family. Non-receptor class CDC14 subfamily. In terms of assembly, interacts with ark1 at the kinetochores. Interacts with bir1, cdc25, mid1, nbl1, pic1, and rad24. Post-translationally, phosphorylated by cds1, chk1, pmk1, and cdc2 upon Hydroxylurea and H(2)O(2) stress treatment. Phosphorylation regulates the nucleolar-to-nucleoplasmic transition. Is able to autodephosphorylate.

Its subcellular location is the nucleus. The protein resides in the nucleolus. The protein localises to the cytoplasm. It localises to the cytoskeleton. It is found in the microtubule organizing center. Its subcellular location is the spindle pole body. It carries out the reaction O-phospho-L-tyrosyl-[protein] + H2O = L-tyrosyl-[protein] + phosphate. Protein phosphatase which antagonizes mitotic cyclin-dependent kinase cdc2, the inactivation of which is essential for exit from mitosis. To access its substrates, is released from nucleolar sequestration during mitosis. Plays an essential in coordinating the nuclear division cycle with cytokinesis through the cytokinesis checkpoint. Involved in chromosome segregation, where it is required for meiosis I spindle dissambly as well as for establishing two consecutive chromosome segregation phases. Allows damaged actomyosin rings to be maintained to facilitate completion of cell division in response to minor perturbation of the cell division machinery. Dephosphorylates the mitotic inducer cdc25 for its rapid degradation. Down-regulation of cdc25 activity ensures a prompt inactivation of mitotic cdc2 complexes to trigger cell division. Also dephosphorylates cdc2-phosphorylated nsk1, allowing nsk1-binding to kinetochores and spindle. Dephosphorylates ase1, which is essential for spindle midzone assembly and for continuous extension of the anaphase spindle. Tethered to the contractile ring by mid1, where it dephosphorylates cdc15. This is Tyrosine-protein phosphatase CDC14 homolog (clp1) from Schizosaccharomyces pombe (strain 972 / ATCC 24843) (Fission yeast).